A 185-amino-acid polypeptide reads, in one-letter code: Putative tyrosine-protein phosphatase OCA1 (185 aa).

The Tyrosine-protein phosphatase domain maps to 18-178 (NFCPVEKQLY…TVEIGSGKGS (161 aa)). Catalysis depends on cysteine 116, which acts as the Phosphocysteine intermediate.

Belongs to the protein-tyrosine phosphatase family.

Its subcellular location is the cytoplasm. The enzyme catalyses O-phospho-L-tyrosyl-[protein] + H2O = L-tyrosyl-[protein] + phosphate. Putative tyrosine-protein phosphatase required for protection against superoxide stress. The sequence is that of Putative tyrosine-protein phosphatase OCA1 (OCA1) from Meyerozyma guilliermondii (strain ATCC 6260 / CBS 566 / DSM 6381 / JCM 1539 / NBRC 10279 / NRRL Y-324) (Yeast).